Reading from the N-terminus, the 100-residue chain is ATP-dependent Clp protease adapter protein ClpS (100 aa).

Belongs to the ClpS family. Binds to the N-terminal domain of the chaperone ClpA.

In terms of biological role, involved in the modulation of the specificity of the ClpAP-mediated ATP-dependent protein degradation. The chain is ATP-dependent Clp protease adapter protein ClpS from Corynebacterium glutamicum (strain R).